We begin with the raw amino-acid sequence, 188 residues long: NAD(P)H-quinone oxidoreductase subunit J (188 aa).

This sequence belongs to the complex I 30 kDa subunit family. As to quaternary structure, NDH-1 can be composed of about 15 different subunits; different subcomplexes with different compositions have been identified which probably have different functions.

The protein resides in the cellular thylakoid membrane. It catalyses the reaction a plastoquinone + NADH + (n+1) H(+)(in) = a plastoquinol + NAD(+) + n H(+)(out). The catalysed reaction is a plastoquinone + NADPH + (n+1) H(+)(in) = a plastoquinol + NADP(+) + n H(+)(out). Functionally, NDH-1 shuttles electrons from an unknown electron donor, via FMN and iron-sulfur (Fe-S) centers, to quinones in the respiratory and/or the photosynthetic chain. The immediate electron acceptor for the enzyme in this species is believed to be plastoquinone. Couples the redox reaction to proton translocation, and thus conserves the redox energy in a proton gradient. Cyanobacterial NDH-1 also plays a role in inorganic carbon-concentration. The chain is NAD(P)H-quinone oxidoreductase subunit J from Parasynechococcus marenigrum (strain WH8102).